Consider the following 142-residue polypeptide: Transcription antitermination protein NusB (142 aa).

The protein belongs to the NusB family.

In terms of biological role, involved in transcription antitermination. Required for transcription of ribosomal RNA (rRNA) genes. Binds specifically to the boxA antiterminator sequence of the ribosomal RNA (rrn) operons. In Thermobifida fusca (strain YX), this protein is Transcription antitermination protein NusB.